The following is a 156-amino-acid chain: 6,7-dimethyl-8-ribityllumazine synthase (156 aa).

5-amino-6-(D-ribitylamino)uracil is bound by residues Phe-23, 57-59 (AFE), and 81-83 (AII). 86-87 (ST) is a binding site for (2S)-2-hydroxy-3-oxobutyl phosphate. His-89 (proton donor) is an active-site residue. Phe-114 contributes to the 5-amino-6-(D-ribitylamino)uracil binding site. Arg-128 contacts (2S)-2-hydroxy-3-oxobutyl phosphate.

The protein belongs to the DMRL synthase family.

The enzyme catalyses (2S)-2-hydroxy-3-oxobutyl phosphate + 5-amino-6-(D-ribitylamino)uracil = 6,7-dimethyl-8-(1-D-ribityl)lumazine + phosphate + 2 H2O + H(+). The protein operates within cofactor biosynthesis; riboflavin biosynthesis; riboflavin from 2-hydroxy-3-oxobutyl phosphate and 5-amino-6-(D-ribitylamino)uracil: step 1/2. Functionally, catalyzes the formation of 6,7-dimethyl-8-ribityllumazine by condensation of 5-amino-6-(D-ribitylamino)uracil with 3,4-dihydroxy-2-butanone 4-phosphate. This is the penultimate step in the biosynthesis of riboflavin. This Wolinella succinogenes (strain ATCC 29543 / DSM 1740 / CCUG 13145 / JCM 31913 / LMG 7466 / NCTC 11488 / FDC 602W) (Vibrio succinogenes) protein is 6,7-dimethyl-8-ribityllumazine synthase.